The following is a 417-amino-acid chain: Serine hydroxymethyltransferase (417 aa).

(6S)-5,6,7,8-tetrahydrofolate-binding positions include Leu-121 and Gly-125–Leu-127. Residue Lys-230 is modified to N6-(pyridoxal phosphate)lysine. Position 355-357 (Ser-355–Phe-357) interacts with (6S)-5,6,7,8-tetrahydrofolate.

Belongs to the SHMT family. Homodimer. Pyridoxal 5'-phosphate serves as cofactor.

It is found in the cytoplasm. The enzyme catalyses (6R)-5,10-methylene-5,6,7,8-tetrahydrofolate + glycine + H2O = (6S)-5,6,7,8-tetrahydrofolate + L-serine. The protein operates within one-carbon metabolism; tetrahydrofolate interconversion. It participates in amino-acid biosynthesis; glycine biosynthesis; glycine from L-serine: step 1/1. Functionally, catalyzes the reversible interconversion of serine and glycine with tetrahydrofolate (THF) serving as the one-carbon carrier. This reaction serves as the major source of one-carbon groups required for the biosynthesis of purines, thymidylate, methionine, and other important biomolecules. Also exhibits THF-independent aldolase activity toward beta-hydroxyamino acids, producing glycine and aldehydes, via a retro-aldol mechanism. This chain is Serine hydroxymethyltransferase, found in Ruthia magnifica subsp. Calyptogena magnifica.